Reading from the N-terminus, the 154-residue chain is Proline dehydrogenase transcriptional activator (154 aa).

The HTH asnC-type domain occupies Ile5–Ile66. A DNA-binding region (H-T-H motif) is located at residues Val24–Arg43.

Transcriptional activator of the putA gene in response to proline. The chain is Proline dehydrogenase transcriptional activator (putR) from Rhodobacter capsulatus (Rhodopseudomonas capsulata).